Here is a 178-residue protein sequence, read N- to C-terminus: Cytochrome b6-f complex iron-sulfur subunit (178 aa).

A helical membrane pass occupies residues 20–42; it reads LLTFGTATGVALGALYPVANYFM. A Rieske domain is found at 65 to 161; it reads KTGWLATHQA…VDIEDDAVLV (97 aa). Positions 107, 109, 125, and 128 each coordinate [2Fe-2S] cluster. A disulfide bond links C112 and C127.

Belongs to the Rieske iron-sulfur protein family. As to quaternary structure, the 4 large subunits of the cytochrome b6-f complex are cytochrome b6, subunit IV (17 kDa polypeptide, PetD), cytochrome f and the Rieske protein, while the 4 small subunits are PetG, PetL, PetM and PetN. The complex functions as a dimer. Requires [2Fe-2S] cluster as cofactor.

The protein localises to the cellular thylakoid membrane. The catalysed reaction is 2 oxidized [plastocyanin] + a plastoquinol + 2 H(+)(in) = 2 reduced [plastocyanin] + a plastoquinone + 4 H(+)(out). Functionally, component of the cytochrome b6-f complex, which mediates electron transfer between photosystem II (PSII) and photosystem I (PSI), cyclic electron flow around PSI, and state transitions. The polypeptide is Cytochrome b6-f complex iron-sulfur subunit (Prochlorococcus marinus (strain MIT 9312)).